Here is a 521-residue protein sequence, read N- to C-terminus: Importin subunit alpha-3 (521 aa).

Ala-2 carries the post-translational modification N-acetylalanine. In terms of domain architecture, IBB spans 2–58 (ADNEKLDNQRLKNFKNKGRDLETMRRQRNEVVVELRKNKRDEHLLKRRNVPQEDICE). The Nuclear localization signal motif lies at 43–52 (EHLLKRRNVP). Ser-60 is modified (phosphoserine). An ARM 1; truncated repeat occupies 66-106 (YRVQNTSLEAIVQNASSDNQGIQLSAVQAARKLLSSDRNPP). 8 ARM repeats span residues 107–149 (IDDL…TSEQ), 150–194 (TQAV…CRDY), 195–233 (VISL…HKDP), 234–278 (PPPM…EQIQ), 279–318 (MVID…TDEQ), 319–360 (TQVV…NQQQ), 361–400 (VQAV…ISGR), and 401–443 (KDQV…KMAE). Residues 137 to 229 (WALTNIASGT…VTWVMVNLCR (93 aa)) form an NLS binding site (major) region. An NLS binding site (minor) region spans residues 306 to 394 (RAVGNIVTGT…QKEAAWAISN (89 aa)). The ARM 10; atypical repeat unit spans residues 447 to 485 (ETIANLIEECGGLEKIEQLQNHENEDIYKLAYEIIDQFF).

The protein belongs to the importin alpha family. Forms a complex with importin subunit beta-1 (KPNB1). Interacts with SNAI1. Interacts with TALDO1 isoform 1. Interacts with CYB1. Detected more or less in all tissues examined (Ehrlich ascites tumor cells, testis, kidney, spleen, liver, heart, lung, thymus, skeletal muscle, cerebellum and brain (without cerebellum)). Multiple-sized transcripts were highly expressed, especially in testis.

The protein resides in the cytoplasm. It localises to the nucleus. Its function is as follows. Functions in nuclear protein import as an adapter protein for nuclear receptor KPNB1. Binds specifically and directly to substrates containing either a simple or bipartite NLS motif. Docking of the importin/substrate complex to the nuclear pore complex (NPC) is mediated by KPNB1 through binding to nucleoporin FxFG repeats and the complex is subsequently translocated through the pore by an energy requiring, Ran-dependent mechanism. At the nucleoplasmic side of the NPC, Ran binds to importin-beta and the three components separate and importin-alpha and -beta are re-exported from the nucleus to the cytoplasm where GTP hydrolysis releases Ran from importin. The directionality of nuclear import is thought to be conferred by an asymmetric distribution of the GTP- and GDP-bound forms of Ran between the cytoplasm and nucleus. Mediates nuclear import of AARS1, MRTFA and RANBP3. The sequence is that of Importin subunit alpha-3 (Kpna4) from Mus musculus (Mouse).